The primary structure comprises 348 residues: Phospho-2-dehydro-3-deoxyheptonate aldolase, Trp-sensitive (348 aa).

The protein belongs to the class-I DAHP synthase family.

It catalyses the reaction D-erythrose 4-phosphate + phosphoenolpyruvate + H2O = 7-phospho-2-dehydro-3-deoxy-D-arabino-heptonate + phosphate. It participates in metabolic intermediate biosynthesis; chorismate biosynthesis; chorismate from D-erythrose 4-phosphate and phosphoenolpyruvate: step 1/7. Stereospecific condensation of phosphoenolpyruvate (PEP) and D-erythrose-4-phosphate (E4P) giving rise to 3-deoxy-D-arabino-heptulosonate-7-phosphate (DAHP). The protein is Phospho-2-dehydro-3-deoxyheptonate aldolase, Trp-sensitive (aroH) of Escherichia coli O157:H7.